The sequence spans 98 residues: NADH-ubiquinone oxidoreductase chain 4L (98 aa).

3 helical membrane passes run 1-21, 28-48, and 59-79; these read MAPINLNLILAFSLALLGVLI, STLLCLEGMMLSLFILMTLLI, and APLILLVFSACEAGVGLALLV.

Belongs to the complex I subunit 4L family. As to quaternary structure, core subunit of respiratory chain NADH dehydrogenase (Complex I) which is composed of 45 different subunits.

The protein localises to the mitochondrion inner membrane. It carries out the reaction a ubiquinone + NADH + 5 H(+)(in) = a ubiquinol + NAD(+) + 4 H(+)(out). In terms of biological role, core subunit of the mitochondrial membrane respiratory chain NADH dehydrogenase (Complex I) which catalyzes electron transfer from NADH through the respiratory chain, using ubiquinone as an electron acceptor. Part of the enzyme membrane arm which is embedded in the lipid bilayer and involved in proton translocation. This is NADH-ubiquinone oxidoreductase chain 4L (MT-ND4L) from Perameles gunnii (Eastern barred bandicoot).